We begin with the raw amino-acid sequence, 109 residues long: UPF0122 protein CLH_1195 (109 aa).

It belongs to the UPF0122 family.

In terms of biological role, might take part in the signal recognition particle (SRP) pathway. This is inferred from the conservation of its genetic proximity to ftsY/ffh. May be a regulatory protein. The polypeptide is UPF0122 protein CLH_1195 (Clostridium botulinum (strain Alaska E43 / Type E3)).